A 322-amino-acid chain; its full sequence is ATP-dependent 6-phosphofructokinase (322 aa).

Position 13 (glycine 13) interacts with ATP. An ADP-binding site is contributed by 23–27 (RAVVR). ATP is bound by residues 74–75 (RC) and 104–107 (GDGS). Aspartate 105 serves as a coordination point for Mg(2+). A substrate-binding site is contributed by 127–129 (TID). Aspartate 129 (proton acceptor) is an active-site residue. Residue arginine 156 coordinates ADP. Substrate-binding positions include arginine 164 and 171–173 (MGR). ADP is bound by residues 187 to 189 (GAE) and 215 to 217 (KRH). Residues glutamate 224, arginine 246, and 252 to 255 (HIQR) each bind substrate.

The protein belongs to the phosphofructokinase type A (PFKA) family. ATP-dependent PFK group I subfamily. Prokaryotic clade 'B1' sub-subfamily. As to quaternary structure, homotetramer. Mg(2+) is required as a cofactor.

The protein localises to the cytoplasm. The enzyme catalyses beta-D-fructose 6-phosphate + ATP = beta-D-fructose 1,6-bisphosphate + ADP + H(+). Its pathway is carbohydrate degradation; glycolysis; D-glyceraldehyde 3-phosphate and glycerone phosphate from D-glucose: step 3/4. Allosterically activated by ADP and other diphosphonucleosides, and allosterically inhibited by phosphoenolpyruvate. Its function is as follows. Catalyzes the phosphorylation of D-fructose 6-phosphate to fructose 1,6-bisphosphate by ATP, the first committing step of glycolysis. The protein is ATP-dependent 6-phosphofructokinase of Paenibacillus macquariensis (Bacillus macquariensis).